The following is a 278-amino-acid chain: HTH-type transcriptional activator RhaS (278 aa).

An HTH araC/xylS-type domain is found at 174–272; it reads NLLLAWLEDH…NWSPRDIRQG (99 aa). 2 consecutive DNA-binding regions (H-T-H motif) follow at residues 191 to 212 and 239 to 262; these read DAVA…KQKT and VTDI…RREF.

Binds DNA as a dimer.

The protein localises to the cytoplasm. Functionally, activates expression of the rhaBAD and rhaT operons. The polypeptide is HTH-type transcriptional activator RhaS (Escherichia coli O45:K1 (strain S88 / ExPEC)).